A 307-amino-acid polypeptide reads, in one-letter code: Ribonuclease Z (307 aa).

The Zn(2+) site is built by His-61, His-63, Asp-65, His-66, His-138, Asp-208, and His-264. Asp-65 serves as the catalytic Proton acceptor.

It belongs to the RNase Z family. In terms of assembly, homodimer. Requires Zn(2+) as cofactor.

It catalyses the reaction Endonucleolytic cleavage of RNA, removing extra 3' nucleotides from tRNA precursor, generating 3' termini of tRNAs. A 3'-hydroxy group is left at the tRNA terminus and a 5'-phosphoryl group is left at the trailer molecule.. Zinc phosphodiesterase, which displays some tRNA 3'-processing endonuclease activity. Probably involved in tRNA maturation, by removing a 3'-trailer from precursor tRNA. This is Ribonuclease Z from Pyrococcus horikoshii (strain ATCC 700860 / DSM 12428 / JCM 9974 / NBRC 100139 / OT-3).